We begin with the raw amino-acid sequence, 352 residues long: N-terminal EF-hand calcium-binding protein 1 (352 aa).

A Phosphoserine modification is found at serine 4. EF-hand domains are found at residues 26-61 (KGMS…GVLS) and 60-95 (LSGE…HLGE). Residues aspartate 39, asparagine 41, aspartate 43, lysine 45, and glutamate 50 each coordinate Ca(2+). Residues 135 to 163 (LLKETLNQLQSLQNSLECAMETTEEQTRQ) are a coiled coil. The interval 180–202 (GKRSSRRVQRHNSFSPNSPQFNV) is disordered. A compositionally biased stretch (polar residues) spans 190–202 (HNSFSPNSPQFNV). Serine 192 and serine 197 each carry phosphoserine. The stretch at 209–275 (EEDNQWMTQI…EEFQLALKHY (67 aa)) forms a coiled coil. In terms of domain architecture, ABM spans 252–340 (MLVQRQMSVI…LETPELTSTM (89 aa)).

Interacts with STX1. May interact with CPNE6.

Its subcellular location is the cytoplasm. The sequence is that of N-terminal EF-hand calcium-binding protein 1 (NECAB1) from Pongo abelii (Sumatran orangutan).